The chain runs to 89 residues: Small ribosomal subunit protein bS20 (89 aa).

Belongs to the bacterial ribosomal protein bS20 family.

Binds directly to 16S ribosomal RNA. In Stenotrophomonas maltophilia (strain K279a), this protein is Small ribosomal subunit protein bS20.